The following is a 72-amino-acid chain: Translation initiation factor IF-1 2 (72 aa).

In terms of domain architecture, S1-like spans Met1–Lys72.

Belongs to the IF-1 family. Component of the 30S ribosomal translation pre-initiation complex which assembles on the 30S ribosome in the order IF-2 and IF-3, IF-1 and N-formylmethionyl-tRNA(fMet); mRNA recruitment can occur at any time during PIC assembly.

The protein resides in the cytoplasm. One of the essential components for the initiation of protein synthesis. Stabilizes the binding of IF-2 and IF-3 on the 30S subunit to which N-formylmethionyl-tRNA(fMet) subsequently binds. Helps modulate mRNA selection, yielding the 30S pre-initiation complex (PIC). Upon addition of the 50S ribosomal subunit IF-1, IF-2 and IF-3 are released leaving the mature 70S translation initiation complex. The polypeptide is Translation initiation factor IF-1 2 (Cupriavidus metallidurans (strain ATCC 43123 / DSM 2839 / NBRC 102507 / CH34) (Ralstonia metallidurans)).